Here is a 218-residue protein sequence, read N- to C-terminus: Cytochrome P450 3A19 (218 aa).

Cys153 contributes to the heme binding site.

It belongs to the cytochrome P450 family. Requires heme as cofactor.

The protein resides in the endoplasmic reticulum membrane. It is found in the microsome membrane. The catalysed reaction is an organic molecule + reduced [NADPH--hemoprotein reductase] + O2 = an alcohol + oxidized [NADPH--hemoprotein reductase] + H2O + H(+). Functionally, cytochromes P450 are a group of heme-thiolate monooxygenases. In liver microsomes, this enzyme is involved in an NADPH-dependent electron transport pathway. It oxidizes a variety of structurally unrelated compounds, including steroids, fatty acids, and xenobiotics. This is Cytochrome P450 3A19 (CYP3A19) from Capra hircus aegagrus (Wild goat).